The chain runs to 322 residues: HPr kinase/phosphorylase (322 aa).

Residues His-153 and Lys-174 contribute to the active site. 168 to 175 contacts ATP; the sequence is GRSGLGKS. Ser-175 contributes to the Mg(2+) binding site. The Proton acceptor; for phosphorylation activity. Proton donor; for dephosphorylation activity role is filled by Asp-192. The important for the catalytic mechanism of both phosphorylation and dephosphorylation stretch occupies residues 217 to 226; that stretch reads MEIRGLGVVD. Glu-218 contributes to the Mg(2+) binding site. Residue Arg-259 is part of the active site. The segment at 280-285 is important for the catalytic mechanism of dephosphorylation; sequence PIFPGK.

The protein belongs to the HPrK/P family. In terms of assembly, homohexamer. The cofactor is Mg(2+).

The catalysed reaction is [HPr protein]-L-serine + ATP = [HPr protein]-O-phospho-L-serine + ADP + H(+). The enzyme catalyses [HPr protein]-O-phospho-L-serine + phosphate + H(+) = [HPr protein]-L-serine + diphosphate. In terms of biological role, catalyzes the ATP- as well as the pyrophosphate-dependent phosphorylation of a specific serine residue in HPr, a phosphocarrier protein of the phosphoenolpyruvate-dependent sugar phosphotransferase system (PTS). HprK/P also catalyzes the pyrophosphate-producing, inorganic phosphate-dependent dephosphorylation (phosphorolysis) of seryl-phosphorylated HPr (P-Ser-HPr). The protein is HPr kinase/phosphorylase of Chlorobium phaeobacteroides (strain DSM 266 / SMG 266 / 2430).